Reading from the N-terminus, the 254-residue chain is MESYLVDTYQGIPYTAAVQVDLVEKDLLPASLTIWFPLFQANTPPAVLLDQLKTLTITTLYAASQSGPILKVNASAQGAAMSVLPKKFEVNATVALDEYSKLEFDKLTVCEVKTVYLTTMKPYGMVSKFVSSAKPVGKKTHDLIALCDFMDLEKNTPVTIPAFIKSVSIKESESATVEAAISSEADQALTQAKIAPYAGLIMIMTMNNPKGIFKKLGAGTQVIVELGAYVQAESISKICKTWSHQGTRYVLKSR.

An interaction with M2-1 region spans residues 1–110 (MESYLVDTYQ…KLEFDKLTVC (110 aa)). Residues 110–183 (CEVKTVYLTT…SATVEAAISS (74 aa)) are nuclear targeting and binding to host importin KPNB1. The Nuclear export signal motif lies at 194 to 206 (IAPYAGLIMIMTM). Threonine 205 bears the Phosphothreonine mark.

Belongs to the pneumovirinae M protein family. Forms dimers. Forms higher-order oligomers. Interacts with glycoprotein G (via N-terminus). Interacts with protein M2-1; this interaction directs the matrix protein localization to cytoplasmic inclusions comprising viral proteins L, N, P, and M2-1 and mediates the matrix protein association with the nucleocapsid. Phosphorylation is important for oligomerization.

It is found in the virion. The protein localises to the host cytoplasm. It localises to the host nucleus. The protein resides in the host cell membrane. Its function is as follows. Plays a crucial role in virus assembly into filaments and budding. Early in infection, localizes in the nucleus where it may inhibit host cell transcription. Later in infection, traffics to the cytoplasm through the action of host CRM1 to associate with inclusion bodies, the site of viral transcription and replication. During virus assembly and budding, acts as a bridge between the nucleocapsid and the lipid bilayer. The polypeptide is Matrix protein (M) (Homo sapiens (Human)).